The following is a 371-amino-acid chain: Thyroid transcription factor 1 (371 aa).

The homeobox DNA-binding region spans 161–220; sequence RRKRRVLFSQAQVYELERRFKQQKYLSAPEREHLASMIHLTPTQVKIWFQNHRYKMKRQA. Disordered stretches follow at residues 219–294 and 308–342; these read QAKD…QQQA and SGGPGLGAHPGHQPGSAGQSPDLAHHAASPAALQG. Residues 233–243 are compositionally biased toward gly residues; sequence SGGGGGGGGAG. Composition is skewed to low complexity over residues 244-253 and 272-294; these read CPQQQQAQQQ and AGAPAPGAGSLQGHAQQQAQQQA.

The protein belongs to the NK-2 homeobox family. Post-translationally, phosphorylated on serine residues. As to expression, thyroid, lung and CNS.

The protein localises to the nucleus. In terms of biological role, transcription factor that binds and activates the promoter of thyroid specific genes such as thyroglobulin, thyroperoxidase, and thyrotropin receptor. Crucial in the maintenance of the thyroid differentiation phenotype. May play a role in lung development and surfactant homeostasis. The protein is Thyroid transcription factor 1 (TITF1) of Canis lupus familiaris (Dog).